The primary structure comprises 237 residues: Uridylate kinase (237 aa).

K12 to G15 contributes to the ATP binding site. A UMP-binding site is contributed by G53. ATP-binding residues include G54 and R58. UMP is bound by residues D73 and T134 to T141. Residues T161, Y167, and D170 each coordinate ATP.

It belongs to the UMP kinase family. Homohexamer.

The protein localises to the cytoplasm. The catalysed reaction is UMP + ATP = UDP + ADP. The protein operates within pyrimidine metabolism; CTP biosynthesis via de novo pathway; UDP from UMP (UMPK route): step 1/1. Its activity is regulated as follows. Inhibited by UTP. In terms of biological role, catalyzes the reversible phosphorylation of UMP to UDP. The polypeptide is Uridylate kinase (Rhizorhabdus wittichii (strain DSM 6014 / CCUG 31198 / JCM 15750 / NBRC 105917 / EY 4224 / RW1) (Sphingomonas wittichii)).